The chain runs to 201 residues: Recombination protein RecR (201 aa).

The segment at 57 to 72 (CKYCANFTNKDECDIC) adopts a C4-type zinc-finger fold. Residues 80–176 (TKLMIVTTNE…QIYRIGFGIP (97 aa)) form the Toprim domain.

The protein belongs to the RecR family.

May play a role in DNA repair. It seems to be involved in an RecBC-independent recombinational process of DNA repair. It may act with RecF and RecO. The polypeptide is Recombination protein RecR (Ureaplasma parvum serovar 3 (strain ATCC 27815 / 27 / NCTC 11736)).